Consider the following 294-residue polypeptide: ATP phosphoribosyltransferase (294 aa).

Belongs to the ATP phosphoribosyltransferase family. Long subfamily. It depends on Mg(2+) as a cofactor.

Its subcellular location is the cytoplasm. The enzyme catalyses 1-(5-phospho-beta-D-ribosyl)-ATP + diphosphate = 5-phospho-alpha-D-ribose 1-diphosphate + ATP. Its pathway is amino-acid biosynthesis; L-histidine biosynthesis; L-histidine from 5-phospho-alpha-D-ribose 1-diphosphate: step 1/9. Feedback inhibited by histidine. Catalyzes the condensation of ATP and 5-phosphoribose 1-diphosphate to form N'-(5'-phosphoribosyl)-ATP (PR-ATP). Has a crucial role in the pathway because the rate of histidine biosynthesis seems to be controlled primarily by regulation of HisG enzymatic activity. This Maricaulis maris (strain MCS10) (Caulobacter maris) protein is ATP phosphoribosyltransferase.